A 162-amino-acid polypeptide reads, in one-letter code: NADH-quinone oxidoreductase subunit I 2 (162 aa).

2 consecutive 4Fe-4S ferredoxin-type domains span residues 52-82 (LRRYPNGEERCIACKLCEAICPAQAITIEAG) and 93-122 (VRYDIDMVKCIYCGLCQEACPVDAIVEGPN). [4Fe-4S] cluster contacts are provided by Cys62, Cys65, Cys68, Cys72, Cys102, Cys105, Cys108, and Cys112.

It belongs to the complex I 23 kDa subunit family. In terms of assembly, NDH-1 is composed of 14 different subunits. Subunits NuoA, H, J, K, L, M, N constitute the membrane sector of the complex. [4Fe-4S] cluster serves as cofactor.

Its subcellular location is the cell inner membrane. The enzyme catalyses a quinone + NADH + 5 H(+)(in) = a quinol + NAD(+) + 4 H(+)(out). NDH-1 shuttles electrons from NADH, via FMN and iron-sulfur (Fe-S) centers, to quinones in the respiratory chain. The immediate electron acceptor for the enzyme in this species is believed to be ubiquinone. Couples the redox reaction to proton translocation (for every two electrons transferred, four hydrogen ions are translocated across the cytoplasmic membrane), and thus conserves the redox energy in a proton gradient. This chain is NADH-quinone oxidoreductase subunit I 2, found in Rhodopseudomonas palustris (strain BisB5).